The chain runs to 60 residues: Small ribosomal subunit protein bS21 (60 aa).

The tract at residues 39–60 is disordered; the sequence is ETPQEKRKRKAVARRRQRTRRR. Residues 44–60 show a composition bias toward basic residues; it reads KRKRKAVARRRQRTRRR.

It belongs to the bacterial ribosomal protein bS21 family.

The sequence is that of Small ribosomal subunit protein bS21 from Microcystis aeruginosa (strain NIES-843 / IAM M-2473).